The following is a 57-amino-acid chain: Benzylsuccinate synthase gamma subunit (57 aa).

As to quaternary structure, heterohexamer composed of 2 alpha subunits, 2 beta subunits and 2 gamma subunits.

It carries out the reaction toluene + fumarate = 2-benzylsuccinate. Its pathway is xenobiotic degradation; toluene degradation. Its activity is regulated as follows. Activated by the benzylsuccinate synthase activating enzyme BssD. Rapidly inactivated by oxygen. Catalyzes the addition of fumarate to the methyl group of toluene, leading to the formation of benzylsuccinate. In Thauera aromatica, this protein is Benzylsuccinate synthase gamma subunit (bssC).